The chain runs to 188 residues: Peptidyl-tRNA hydrolase (188 aa).

Tyr-14 contacts tRNA. The Proton acceptor role is filled by His-19. TRNA is bound by residues Phe-64, Asn-66, and Asn-112.

This sequence belongs to the PTH family. As to quaternary structure, monomer.

The protein localises to the cytoplasm. It carries out the reaction an N-acyl-L-alpha-aminoacyl-tRNA + H2O = an N-acyl-L-amino acid + a tRNA + H(+). Hydrolyzes ribosome-free peptidyl-tRNAs (with 1 or more amino acids incorporated), which drop off the ribosome during protein synthesis, or as a result of ribosome stalling. Its function is as follows. Catalyzes the release of premature peptidyl moieties from peptidyl-tRNA molecules trapped in stalled 50S ribosomal subunits, and thus maintains levels of free tRNAs and 50S ribosomes. This chain is Peptidyl-tRNA hydrolase, found in Enterococcus faecalis (strain ATCC 700802 / V583).